Consider the following 137-residue polypeptide: Ribonuclease P protein component (137 aa).

The protein belongs to the RnpA family. In terms of assembly, consists of a catalytic RNA component (M1 or rnpB) and a protein subunit.

The catalysed reaction is Endonucleolytic cleavage of RNA, removing 5'-extranucleotides from tRNA precursor.. In terms of biological role, RNaseP catalyzes the removal of the 5'-leader sequence from pre-tRNA to produce the mature 5'-terminus. It can also cleave other RNA substrates such as 4.5S RNA. The protein component plays an auxiliary but essential role in vivo by binding to the 5'-leader sequence and broadening the substrate specificity of the ribozyme. This chain is Ribonuclease P protein component, found in Porphyromonas gingivalis (strain ATCC 33277 / DSM 20709 / CIP 103683 / JCM 12257 / NCTC 11834 / 2561).